The chain runs to 366 residues: tRNA-specific 2-thiouridylase MnmA (366 aa).

ATP is bound by residues 6–13 and Leu32; that span reads AMSGGVDS. The Nucleophile role is filled by Cys101. Cys101 and Cys199 form a disulfide bridge. Residue Gly125 participates in ATP binding. Positions 149–151 are interaction with tRNA; it reads KDQ. Cys199 (cysteine persulfide intermediate) is an active-site residue.

It belongs to the MnmA/TRMU family.

It is found in the cytoplasm. The enzyme catalyses S-sulfanyl-L-cysteinyl-[protein] + uridine(34) in tRNA + AH2 + ATP = 2-thiouridine(34) in tRNA + L-cysteinyl-[protein] + A + AMP + diphosphate + H(+). In terms of biological role, catalyzes the 2-thiolation of uridine at the wobble position (U34) of tRNA, leading to the formation of s(2)U34. The polypeptide is tRNA-specific 2-thiouridylase MnmA (Corynebacterium diphtheriae (strain ATCC 700971 / NCTC 13129 / Biotype gravis)).